The chain runs to 357 residues: bZIP transcription factor 23 (357 aa).

The disordered stretch occupies residues 166–185 (PPVPPAPTPTAAAVPPPPPP). The bZIP domain maps to 275 to 338 (VERRQRRMIK…KNEVLERMSR (64 aa)). The basic motif stretch occupies residues 277–296 (RRQRRMIKNRESAARSRQRK). Positions 303–317 (LEAEVAKLKELNDEL) are leucine-zipper.

The protein belongs to the bZIP family. ABI5 subfamily. As to expression, highly expressed in leaves.

Its subcellular location is the nucleus. In terms of biological role, transcriptional activator that mediates abscisic acid (ABA) signaling. Can regulate the expression of a wide spectrum of stress-related genes in response to abiotic stresses through an ABA-dependent regulation pathway. Confers ABA-dependent drought and salinity tolerance. Binds specifically to the ABA-responsive elements (ABRE) in the promoter of target genes to mediate stress-responsive ABA signaling. The chain is bZIP transcription factor 23 from Oryza sativa subsp. japonica (Rice).